An 834-amino-acid polypeptide reads, in one-letter code: WPP domain-associated protein (834 aa).

3 coiled-coil regions span residues 410-456, 574-700, and 792-812; these read SFGN…RLQH, SLDT…VLAI, and AEAE…LVEK.

In terms of assembly, interacts with MAF1. As to expression, expressed in seedlings, leaves and fruits.

The protein resides in the golgi apparatus. Its subcellular location is the cytoplasm. In Solanum lycopersicum (Tomato), this protein is WPP domain-associated protein (WAP).